The following is a 480-amino-acid chain: Glutamate--tRNA ligase (480 aa).

The 'HIGH' region signature appears at 21–31 (PSPTGYLHVGG). Zn(2+) contacts are provided by C110, C112, C137, and H139. The 'KMSKS' region motif lies at 248–252 (KLSKR). Residue K251 coordinates ATP.

It belongs to the class-I aminoacyl-tRNA synthetase family. Glutamate--tRNA ligase type 1 subfamily. As to quaternary structure, monomer. It depends on Zn(2+) as a cofactor.

The protein localises to the cytoplasm. It catalyses the reaction tRNA(Glu) + L-glutamate + ATP = L-glutamyl-tRNA(Glu) + AMP + diphosphate. Functionally, catalyzes the attachment of glutamate to tRNA(Glu) in a two-step reaction: glutamate is first activated by ATP to form Glu-AMP and then transferred to the acceptor end of tRNA(Glu). The sequence is that of Glutamate--tRNA ligase from Haemophilus influenzae (strain ATCC 51907 / DSM 11121 / KW20 / Rd).